Consider the following 634-residue polypeptide: Formate--tetrahydrofolate ligase (634 aa).

Residue T78 to S85 participates in ATP binding.

The protein belongs to the formate--tetrahydrofolate ligase family. As to quaternary structure, homodimer.

It catalyses the reaction (6S)-5,6,7,8-tetrahydrofolate + formate + ATP = (6R)-10-formyltetrahydrofolate + ADP + phosphate. Its pathway is one-carbon metabolism; tetrahydrofolate interconversion. This chain is Formate--tetrahydrofolate ligase (THFS), found in Arabidopsis thaliana (Mouse-ear cress).